The primary structure comprises 227 residues: Class I hydrophobin A (227 aa).

The signal sequence occupies residues 1–18; that stretch reads MQFSLSAIVLGLAATVYA. The N-linked (GlcNAc...) asparagine glycan is linked to Asn-50. 3 disulfides stabilise this stretch: Cys-60/Cys-138, Cys-68/Cys-132, and Cys-69/Cys-109.

The protein belongs to the fungal hydrophobin family.

Its subcellular location is the secreted. The protein localises to the cell wall. Its function is as follows. Aerial growth, conidiation, and dispersal of filamentous fungi in the environment rely upon a capability of their secreting small amphipathic proteins called hydrophobins (HPBs) with low sequence identity. Class I can self-assemble into an outermost layer of rodlet bundles on aerial cell surfaces, conferring cellular hydrophobicity that supports fungal growth, development and dispersal; whereas Class II form highly ordered films at water-air interfaces through intermolecular interactions but contribute nothing to the rodlet structure. In P.expansum, hydrophobins contribute to germination, tolerance to cold stress and mycotoxins patulin and citrinin production. HfbA and HfbB are essential for fungal surface hydrophobicity and HfbA mediates air and water dispersal. The protein is Class I hydrophobin A of Penicillium expansum (Blue mold rot fungus).